A 128-amino-acid polypeptide reads, in one-letter code: UPF0102 protein Rfer_3873 (128 aa).

Residues Met1–Gln15 are compositionally biased toward polar residues. Residues Met1–Ala20 are disordered.

This sequence belongs to the UPF0102 family.

The chain is UPF0102 protein Rfer_3873 from Albidiferax ferrireducens (strain ATCC BAA-621 / DSM 15236 / T118) (Rhodoferax ferrireducens).